A 119-amino-acid polypeptide reads, in one-letter code: Large ribosomal subunit protein uL18 (119 aa).

It belongs to the universal ribosomal protein uL18 family. Part of the 50S ribosomal subunit; part of the 5S rRNA/L5/L18/L25 subcomplex. Contacts the 5S and 23S rRNAs.

This is one of the proteins that bind and probably mediate the attachment of the 5S RNA into the large ribosomal subunit, where it forms part of the central protuberance. This chain is Large ribosomal subunit protein uL18, found in Cupriavidus metallidurans (strain ATCC 43123 / DSM 2839 / NBRC 102507 / CH34) (Ralstonia metallidurans).